We begin with the raw amino-acid sequence, 234 residues long: Protein rgg8 (234 aa).

It is found in the cytoplasm. It localises to the nucleus. In Schizosaccharomyces pombe (strain 972 / ATCC 24843) (Fission yeast), this protein is Protein rgg8 (rgg8).